The following is a 320-amino-acid chain: MDYDNMVKTLEILKDVVNALECADKGNFDKALEYLEKAQKVDKDNPLVLYVKGIVLKLKGDMEKAEKYFECLENIEGTSLLSLGNLICLTFVKGEYERTLKYIEKLSRLSKPCYLSPFHKALIYIEFGEFEKALEALDEFLKIYPNLTSILRQKASILEILGKLDEALDCVNKILSIKKDDAHAWYLKGRILKKLGNIKEALDALKMAINLNENLVHVYKDIAYLELANNNYEEALNYITKYLEKFPNDVEAKFYLALIYENLNKVDDALKIYDKIISNKNVKDKLLIKSSILNKARILEKLGKIEEAVETYNKAFDNNI.

TPR repeat units lie at residues 12–45, 46–79, 80–113, 114–147, 148–181, 182–215, 216–249, 250–283, and 289–320; these read ILKD…DKDN, PLVL…EGTS, LLSL…SKPC, YLSP…YPNL, TSIL…KKDD, AHAW…NENL, VHVY…FPND, VEAK…KNVK, and KSSI…DNNI.

The polypeptide is TPR repeat-containing protein MJ0263 (Methanocaldococcus jannaschii (strain ATCC 43067 / DSM 2661 / JAL-1 / JCM 10045 / NBRC 100440) (Methanococcus jannaschii)).